Consider the following 219-residue polypeptide: PKHD-type hydroxylase AM1_3707 (219 aa).

One can recognise a Fe2OG dioxygenase domain in the interval 78 to 172; it reads SIHTLLFSRY…RLVAVGWVQS (95 aa). Fe cation contacts are provided by His96, Asp98, and His153. Arg163 is a 2-oxoglutarate binding site.

Fe(2+) is required as a cofactor. L-ascorbate serves as cofactor.

The protein is PKHD-type hydroxylase AM1_3707 of Acaryochloris marina (strain MBIC 11017).